We begin with the raw amino-acid sequence, 962 residues long: Rho GTPase-activating protein syd-1 (962 aa).

Disordered regions lie at residues 231–367, 397–419, and 437–471; these read GKKS…MRSD, PRTL…RIMT, and CGEE…NGSP. Composition is skewed to polar residues over residues 243–261, 323–345, 401–412, and 453–471; these read NATT…SSPR, SFNS…SSTA, RQPNDSNKSNSL, and PPFS…NGSP. One can recognise a C2 domain in the interval 572–696; it reads RAAGPGINVD…NDDRVFALNL (125 aa). The 195-residue stretch at 729 to 923 folds into the Rho-GAP domain; that stretch reads VPLGRLVQRE…LDMNQASSSL (195 aa). Residues 934-947 show a composition bias toward polar residues; sequence VNSESGSDSPATSG. Residues 934–962 form a disordered region; it reads VNSESGSDSPATSGQKGGGGVSYVSESQC.

The protein localises to the synapse. Functionally, probable GTPase activator for the Rho-type GTPases by converting them to an inactive GDP-bound state. Regulates the localization and assembly of presynaptic components during presynaptic development and is required for specifying the identity of axons during initial polarity acquisition. In these roles it is thought to act cell autonomously downstream of syg-1 and syg-2 and upstream of syd-2, possibly as a positive regulator of the latter. Required for the control of movement, egg-laying and the correct localization of elks-1. In Caenorhabditis briggsae, this protein is Rho GTPase-activating protein syd-1.